Reading from the N-terminus, the 157-residue chain is MSRRNRAPKRDILPDPKFKSQVVAKFVNHIMLDGKKSIAEKIVYGAFDKIKAKDASANEVEVFEKALDSVSPMVEVKSRRVGGATYQVPVEVRPERRQTLGMRWIIDAARKRKESTMGDRVAAEILEAIEGRGAAVKKREDTHKMAEANKAFAHFRW.

It belongs to the universal ribosomal protein uS7 family. Part of the 30S ribosomal subunit. Contacts proteins S9 and S11.

Its function is as follows. One of the primary rRNA binding proteins, it binds directly to 16S rRNA where it nucleates assembly of the head domain of the 30S subunit. Is located at the subunit interface close to the decoding center, probably blocks exit of the E-site tRNA. The sequence is that of Small ribosomal subunit protein uS7 from Francisella philomiragia subsp. philomiragia (strain ATCC 25017 / CCUG 19701 / FSC 153 / O#319-036).